Reading from the N-terminus, the 553-residue chain is 5'-nucleotidase domain-containing protein 2 (553 aa).

Positions 26-51 (SSSPSCPGCGPPGPGAHCPSTPRSAP) are disordered. Residue Asp-106 is the Nucleophile of the active site. Mg(2+) contacts are provided by Asp-106, Asp-108, and Asp-391. The active-site Proton donor is Asp-108.

The protein belongs to the 5'(3')-deoxyribonucleotidase family. In terms of assembly, interacts with tyrosine 3-monooxygenase TH; the interaction results in reduced phosphorylation and decreased catalytic activity of TH. As to expression, expressed in eye iridocorneal angle.

Its subcellular location is the cytoplasm. Its function is as follows. Promotes dephosphorylation of tyrosine 3-monooxygenase TH which decreases TH catalytic activity and leads to reduced synthesis of catecholamines including dopamine, noradrenaline and adrenaline. The exact mechanism of activity is unknown but may act as a phosphatase or promote the activity of phosphatases or may inhibit phosphorylation by acting as a barrier to interfere with protein kinase access. This is 5'-nucleotidase domain-containing protein 2 (Nt5dc2) from Rattus norvegicus (Rat).